The following is a 667-amino-acid chain: Leucine aminopeptidase 2 (667 aa).

A peptide is bound by residues 188–190 (QCQ) and 318–323 (PYGGME). Histidine 347 is a Zn(2+) binding site. Glutamate 348 acts as the Proton acceptor in catalysis. Zn(2+) is bound by residues histidine 351 and glutamate 370. The active-site Proton donor is the tyrosine 436.

It belongs to the peptidase M1 family. The cofactor is Zn(2+).

Its subcellular location is the cytoplasm. The protein localises to the nucleus. It catalyses the reaction an epoxide + H2O = an ethanediol. Its function is as follows. Aminopeptidase that preferentially cleaves di- and tripeptides. Also has low epoxide hydrolase activity (in vitro). Can hydrolyze the epoxide leukotriene LTA(4) but it forms preferentially 5,6-dihydroxy-7,9,11,14-eicosatetraenoic acid rather than the cytokine leukotriene B(4) as the product compared to the homologous mammalian enzyme (in vitro). This is Leucine aminopeptidase 2 (ara-1) from Neurospora crassa (strain ATCC 24698 / 74-OR23-1A / CBS 708.71 / DSM 1257 / FGSC 987).